The sequence spans 209 residues: uncharacterized protein (209 aa).

Positions 177 to 209 are disordered; it reads DNSDNSSDSDDSDSLDGSDDLNDSDNVDNLFVG. Over residues 183-202 the composition is skewed to acidic residues; the sequence is SDSDDSDSLDGSDDLNDSDN.

This is an uncharacterized protein from Acanthamoeba polyphaga (Amoeba).